The primary structure comprises 701 residues: Elongation factor G 1 (701 aa).

In terms of domain architecture, tr-type G spans 8–290 (VRYRNIGICA…AVVEYLPAPT (283 aa)). GTP contacts are provided by residues 17–24 (AHVDAGKT), 88–92 (DTPGH), and 142–145 (NKMD).

It belongs to the TRAFAC class translation factor GTPase superfamily. Classic translation factor GTPase family. EF-G/EF-2 subfamily.

Its subcellular location is the cytoplasm. In terms of biological role, catalyzes the GTP-dependent ribosomal translocation step during translation elongation. During this step, the ribosome changes from the pre-translocational (PRE) to the post-translocational (POST) state as the newly formed A-site-bound peptidyl-tRNA and P-site-bound deacylated tRNA move to the P and E sites, respectively. Catalyzes the coordinated movement of the two tRNA molecules, the mRNA and conformational changes in the ribosome. In Saccharophagus degradans (strain 2-40 / ATCC 43961 / DSM 17024), this protein is Elongation factor G 1.